A 445-amino-acid chain; its full sequence is Baccatin III:3-amino-3-phenylpropanoyltransferase (445 aa).

It belongs to the plant acyltransferase family.

The enzyme catalyses (3R)-3-amino-3-phenylpropanoyl-CoA + baccatin III = 3'-N-debenzoyl-2'-deoxytaxol + CoA. It participates in alkaloid biosynthesis; taxol biosynthesis. Acyltransferase involved in taxol biosynthesis. Catalyzes the selective 13-O-acylation of baccatin III with (3R)-3-amino-3-phenylpropanoyl-CoA as the acyl donor to form 3'-N-debenzoyl-2'-deoxytaxol. In Taxus cuspidata (Japanese yew), this protein is Baccatin III:3-amino-3-phenylpropanoyltransferase.